A 202-amino-acid polypeptide reads, in one-letter code: ATP-dependent Clp protease proteolytic subunit (202 aa).

Residue Ser106 is the Nucleophile of the active site. The active site involves His131.

Belongs to the peptidase S14 family. In terms of assembly, fourteen ClpP subunits assemble into 2 heptameric rings which stack back to back to give a disk-like structure with a central cavity, resembling the structure of eukaryotic proteasomes.

The protein resides in the cytoplasm. It carries out the reaction Hydrolysis of proteins to small peptides in the presence of ATP and magnesium. alpha-casein is the usual test substrate. In the absence of ATP, only oligopeptides shorter than five residues are hydrolyzed (such as succinyl-Leu-Tyr-|-NHMec, and Leu-Tyr-Leu-|-Tyr-Trp, in which cleavage of the -Tyr-|-Leu- and -Tyr-|-Trp bonds also occurs).. Functionally, cleaves peptides in various proteins in a process that requires ATP hydrolysis. Has a chymotrypsin-like activity. Plays a major role in the degradation of misfolded proteins. This chain is ATP-dependent Clp protease proteolytic subunit, found in Shewanella baltica (strain OS223).